We begin with the raw amino-acid sequence, 180 residues long: Large ribosomal subunit protein bL17 (180 aa).

A disordered region spans residues 134–180; sequence AQAKAKKAAAMPTEESEAKPAEEGDVVGASEPDAKAPEEPPAEAPEN.

It belongs to the bacterial ribosomal protein bL17 family. As to quaternary structure, part of the 50S ribosomal subunit. Contacts protein L32.

The polypeptide is Large ribosomal subunit protein bL17 (Mycobacterium tuberculosis (strain ATCC 25177 / H37Ra)).